Consider the following 303-residue polypeptide: Mycothiol acetyltransferase (303 aa).

N-acetyltransferase domains are found at residues Val-3–Pro-152 and Val-155–Ser-303. 1D-myo-inositol 2-(L-cysteinylamino)-2-deoxy-alpha-D-glucopyranoside is bound at residue Asp-35. Leu-79–Val-81 contacts acetyl-CoA. 1D-myo-inositol 2-(L-cysteinylamino)-2-deoxy-alpha-D-glucopyranoside contacts are provided by Glu-182, Lys-224, and Glu-237. Residues Val-241–Val-243 and Gln-248–Arg-254 each bind acetyl-CoA. Tyr-275 is a 1D-myo-inositol 2-(L-cysteinylamino)-2-deoxy-alpha-D-glucopyranoside binding site.

It belongs to the acetyltransferase family. MshD subfamily. In terms of assembly, monomer.

The enzyme catalyses 1D-myo-inositol 2-(L-cysteinylamino)-2-deoxy-alpha-D-glucopyranoside + acetyl-CoA = mycothiol + CoA + H(+). Catalyzes the transfer of acetyl from acetyl-CoA to desacetylmycothiol (Cys-GlcN-Ins) to form mycothiol. The chain is Mycothiol acetyltransferase from Kocuria rhizophila (strain ATCC 9341 / DSM 348 / NBRC 103217 / DC2201).